The following is a 1387-amino-acid chain: DNA-directed RNA polymerase subunit beta (1387 aa).

This sequence belongs to the RNA polymerase beta chain family. The RNAP catalytic core consists of 2 alpha, 1 beta, 1 beta' and 1 omega subunit. When a sigma factor is associated with the core the holoenzyme is formed, which can initiate transcription.

It catalyses the reaction RNA(n) + a ribonucleoside 5'-triphosphate = RNA(n+1) + diphosphate. Functionally, DNA-dependent RNA polymerase catalyzes the transcription of DNA into RNA using the four ribonucleoside triphosphates as substrates. In Xanthomonas campestris pv. campestris (strain ATCC 33913 / DSM 3586 / NCPPB 528 / LMG 568 / P 25), this protein is DNA-directed RNA polymerase subunit beta.